We begin with the raw amino-acid sequence, 231 residues long: Two-component response regulator ARR3 (231 aa).

The Response regulatory domain maps to 34-161 (HVLAVDDSLV…DVKRLRSYLT (128 aa)). The residue at position 94 (D94) is a 4-aspartylphosphate. A disordered region spans residues 170 to 231 (GNKRKLTTPP…DSPMRSPGLA (62 aa)). Residues 185–199 (SATSSMESSDSTVES) show a composition bias toward low complexity. Residues 210-221 (LTMSPESATSLV) are compositionally biased toward polar residues.

Belongs to the ARR family. Type-A subfamily. Two-component system major event consists of a His-to-Asp phosphorelay between a sensor histidine kinase (HK) and a response regulator (RR). In plants, the His-to-Asp phosphorelay involves an additional intermediate named Histidine-containing phosphotransfer protein (HPt). This multistep phosphorelay consists of a His-Asp-His-Asp sequential transfer of a phosphate group between first a His and an Asp of the HK protein, followed by the transfer to a conserved His of the HPt protein and finally the transfer to an Asp in the receiver domain of the RR protein. Predominantly expressed in roots.

It is found in the nucleus. Functionally, functions as a response regulator involved in His-to-Asp phosphorelay signal transduction system. Phosphorylation of the Asp residue in the receiver domain activates the ability of the protein to promote the transcription of target genes. Type-A response regulators seem to act as negative regulators of the cytokinin signaling. In Arabidopsis thaliana (Mouse-ear cress), this protein is Two-component response regulator ARR3 (ARR3).